Reading from the N-terminus, the 320-residue chain is ATP-dependent 6-phosphofructokinase (320 aa).

Glycine 12 lines the ATP pocket. Residues 22–26 (RGVVR) and 55–60 (RYSVSD) each bind ADP. ATP contacts are provided by residues 73 to 74 (RF) and 103 to 106 (GDGS). Residue aspartate 104 coordinates Mg(2+). Residue 126–128 (TID) coordinates substrate. Aspartate 128 acts as the Proton acceptor in catalysis. ADP is bound at residue arginine 155. Substrate contacts are provided by residues arginine 163 and 170–172 (MGR). ADP contacts are provided by residues 186-188 (GCE), lysine 212, and 214-216 (KKH). Substrate-binding positions include glutamate 223, arginine 244, and 250 to 253 (HIQR).

This sequence belongs to the phosphofructokinase type A (PFKA) family. ATP-dependent PFK group I subfamily. Prokaryotic clade 'B1' sub-subfamily. In terms of assembly, homotetramer. Mg(2+) is required as a cofactor.

The protein resides in the cytoplasm. It catalyses the reaction beta-D-fructose 6-phosphate + ATP = beta-D-fructose 1,6-bisphosphate + ADP + H(+). Its pathway is carbohydrate degradation; glycolysis; D-glyceraldehyde 3-phosphate and glycerone phosphate from D-glucose: step 3/4. With respect to regulation, allosterically activated by ADP and other diphosphonucleosides, and allosterically inhibited by phosphoenolpyruvate. Its function is as follows. Catalyzes the phosphorylation of D-fructose 6-phosphate to fructose 1,6-bisphosphate by ATP, the first committing step of glycolysis. The polypeptide is ATP-dependent 6-phosphofructokinase (Pectobacterium carotovorum subsp. carotovorum (strain PC1)).